The sequence spans 332 residues: MENPANANPIRVGVIGCADIAWRRALPALEAEPLTEVTAIASRRWDRAKRFTERFGGEPVEGYPALLERDDVDAVYVPLPAVLHAEWIDRALRAGKHVLAEKPLTTDRPQAERLFAVARERGLLLMENFMFLHHPQHRQVADMLDEGVIGEIRSFAASFTIPPKPQGDIRYQADVGGGALLDIGVYPIRAAGLFLGADLEFVGAVLRHERDRDVVVGGNALLTTRQGVTAQLTFGMEHAYTNNYEFRGSTGRLWMNRVFTPPATYQPVVHIERQDHAEQFVLPAHDQFAKSIRAFAQAVLSGEHPREWSEDSLRQASLVDAVRTGARDIYFP.

17–23 (CADIAWR) serves as a coordination point for NADP(+). Arg24 serves as a coordination point for substrate. Residues 42–43 (SR), Tyr63, Leu79, and His84 each bind NADP(+). Catalysis depends on Lys102, which acts as the Proton donor. NADP(+) is bound by residues Arg170 and Asp182. Residues Tyr240 and Thr260 each coordinate substrate.

Belongs to the Gfo/Idh/MocA family. In terms of assembly, homotetramer; dimer of dimers.

It catalyses the reaction dTDP-4-dehydro-2,6-dideoxy-alpha-D-glucose + NADP(+) = dTDP-3,4-didehydro-2,6-dideoxy-alpha-D-glucose + NADPH + H(+). The protein operates within antibiotic biosynthesis. Its function is as follows. Involved in the biosynthesis of L-digitoxose, an unusual dideoxysugar attached to various pharmacologically active natural products, including the antitumor antibiotic tetrocarcin A, and the antibiotics kijanimicin and jadomycin B. Catalyzes the reduction of the C-3 keto moiety of dTDP-3,4-diketo-2,6-dideoxy-alpha-D-glucose to yield dTDP-4-keto-2,6-dideoxy-alpha-D-glucose. Also able to reduce dTDP-3-keto-6-deoxy-D-galactose and dTDP-3-keto-6-deoxy-D-glucose to yield dTDP-fucose and dTDP-quinovose, respectively. This is dTDP-3,4-didehydro-2,6-dideoxy-alpha-D-glucose 3-reductase from Actinomadura kijaniata.